The sequence spans 355 residues: Peptide chain release factor 1 (355 aa).

N5-methylglutamine is present on Gln-231.

It belongs to the prokaryotic/mitochondrial release factor family. Post-translationally, methylated by PrmC. Methylation increases the termination efficiency of RF1.

Its subcellular location is the cytoplasm. Its function is as follows. Peptide chain release factor 1 directs the termination of translation in response to the peptide chain termination codons UAG and UAA. This Erythrobacter litoralis (strain HTCC2594) protein is Peptide chain release factor 1.